Consider the following 575-residue polypeptide: DNA-directed RNA polymerase subunit beta' (575 aa).

4 residues coordinate Zn(2+): Cys64, Cys66, Cys85, and Cys88. Asp440, Asp442, and Asp444 together coordinate Mg(2+).

It belongs to the RNA polymerase beta' chain family. RpoC1 subfamily. As to quaternary structure, in plastids the minimal PEP RNA polymerase catalytic core is composed of four subunits: alpha, beta, beta', and beta''. When a (nuclear-encoded) sigma factor is associated with the core the holoenzyme is formed, which can initiate transcription. Mg(2+) is required as a cofactor. The cofactor is Zn(2+).

The protein resides in the plastid. It catalyses the reaction RNA(n) + a ribonucleoside 5'-triphosphate = RNA(n+1) + diphosphate. In terms of biological role, DNA-dependent RNA polymerase catalyzes the transcription of DNA into RNA using the four ribonucleoside triphosphates as substrates. This is DNA-directed RNA polymerase subunit beta' from Euglena longa (Euglenophycean alga).